We begin with the raw amino-acid sequence, 258 residues long: MYECMFFSHRLTIGFYIPLIVLTTMSSLSESLGERQKTACTVAAISCANSDTYNRTTVSNHTFFYISDRWKYSELIRYEKPTGDLRHDKLIHVDREFLDIVSLLHNNENQLRTLLTIFRSDSAPPWVKFMRGYSQCLDHPIIYTCVEEKCQQYNLEELPYGKDIFLENVVGFDLGAPPHNMSVLIAVSNTKPKITKVLRITSTSLTLFDALYNTVLTFFRSIGARNVDVVRRLILYQASLSGPHRDAPIHNYLNRDLS.

The signal sequence occupies residues 1–31 (MYECMFFSHRLTIGFYIPLIVLTTMSSLSES). Residues 36–243 (QKTACTVAAI…ILYQASLSGP (208 aa)) form the gL betaherpesvirus-type domain. Cysteines 145 and 150 form a disulfide.

The protein belongs to the herpesviridae glycoprotein L (gL) family. Betaherpesvirinae gL subfamily. Interacts with glycoprotein H (gH); this interaction is necessary for the correct processing and cell surface expression of gH. Forms the envelope pentamer complex (PC) composed of gH, gL, UL128, UL130, and UL131A. The pentamer interacts with host NRP2. Forms the envelope trimer complex composed of gH, gL, and gO. The trimer interacts with host PDGFRA.

Its subcellular location is the virion membrane. The protein resides in the host cell membrane. It localises to the host Golgi apparatus. It is found in the host trans-Golgi network. Functionally, the heterodimer glycoprotein H-glycoprotein L is required for the fusion of viral and plasma membranes leading to virus entry into the host cell. Acts as a functional inhibitor of gH and maintains gH in an inhibited form. Upon binding to host integrins, gL dissociates from gH leading to activation of the viral fusion glycoproteins gB and gH. In human cytomegalovirus, forms two distincts complexes to mediate viral entry, a trimer and a pentamer at the surface of the virion envelope. The gH-gL-gO trimer is required for infection in fibroblasts by interacting with host PDGFRA. The gH-gL-UL128-UL130-UL131A pentamer is essential for viral entry in epithelial, endothelial and myeloid cells via interaction with host NRP2. This chain is Envelope glycoprotein L, found in Guinea pig cytomegalovirus (strain 22122) (GPCMV).